The primary structure comprises 331 residues: Isopentenyl-diphosphate delta-isomerase (331 aa).

A substrate-binding site is contributed by 4-5 (RK). FMN is bound by residues 59–61 (AMT), S89, and N116. Q146 provides a ligand contact to substrate. E147 serves as a coordination point for Mg(2+). FMN-binding positions include K178, S203, T208, 252–254 (GIR), and 273–274 (SR).

This sequence belongs to the IPP isomerase type 2 family. As to quaternary structure, homooctamer. Dimer of tetramers. It depends on FMN as a cofactor. The cofactor is NADPH. Mg(2+) is required as a cofactor.

The protein resides in the cytoplasm. It catalyses the reaction isopentenyl diphosphate = dimethylallyl diphosphate. In terms of biological role, involved in the biosynthesis of isoprenoids. Catalyzes the 1,3-allylic rearrangement of the homoallylic substrate isopentenyl (IPP) to its allylic isomer, dimethylallyl diphosphate (DMAPP). In Streptococcus mutans serotype c (strain ATCC 700610 / UA159), this protein is Isopentenyl-diphosphate delta-isomerase.